The sequence spans 646 residues: Long-chain fatty acid transport protein 1 (646 aa).

At 1 to 13 (MRAPGAGTASVAS) the chain is on the extracellular side. The chain crosses the membrane as a helical span at residues 14 to 34 (LALLWFLGLPWTWSAAAAFCV). Residues 35-646 (YVGGGGWRFL…ARICAGDFSL (612 aa)) are Cytoplasmic-facing. A sufficient for oligomerization region spans residues 191–475 (EVSEQLGKSL…YVSDSATNKK (285 aa)). 246–257 (YIYTSGTTGLPK) lines the AMP pocket.

This sequence belongs to the ATP-dependent AMP-binding enzyme family. Self-associates. May function as a homodimer. Interacts with EPRS1; mediates the translocation of SLC27A1 from the cytoplasm to the plasma membrane thereby increasing the uptake of long-chain fatty acids. Interacts with DGAT2 and this interaction is enhanced in the presence of ZFYVE1. Higher expression in white adipose tissue than in heart. Highest expression in skeletal muscle, heart and fat. Lower levels in brain, kidney, lung, liver and testis. No expression in spleen or intestine.

It localises to the cell membrane. Its subcellular location is the mitochondrion outer membrane. The protein localises to the endomembrane system. The protein resides in the cytoplasm. It catalyses the reaction a fatty acid(in) = a fatty acid(out). The catalysed reaction is (9Z)-octadecenoate(out) = (9Z)-octadecenoate(in). It carries out the reaction hexadecanoate(out) = hexadecanoate(in). The enzyme catalyses (5Z,8Z,11Z,14Z)-eicosatetraenoate(out) = (5Z,8Z,11Z,14Z)-eicosatetraenoate(in). It catalyses the reaction (9Z,12Z)-octadecadienoate(out) = (9Z,12Z)-octadecadienoate(in). The catalysed reaction is a long-chain fatty acid + ATP + CoA = a long-chain fatty acyl-CoA + AMP + diphosphate. It carries out the reaction (5Z,8Z,11Z,14Z)-eicosatetraenoate + ATP + CoA = (5Z,8Z,11Z,14Z)-eicosatetraenoyl-CoA + AMP + diphosphate. The enzyme catalyses a very long-chain fatty acid + ATP + CoA = a very long-chain fatty acyl-CoA + AMP + diphosphate. It catalyses the reaction tetracosanoate + ATP + CoA = tetracosanoyl-CoA + AMP + diphosphate. Inhibited by Triacsin C. Both insulin and muscle contraction stimulate translocation to the plasma membrane in muscle, increasing fatty acid transport activity. In terms of biological role, mediates the import of long-chain fatty acids (LCFA) into the cell by facilitating their transport at the plasma membrane. Also functions as an acyl-CoA ligase catalyzing the ATP-dependent formation of fatty acyl-CoA using LCFA and very-long-chain fatty acids (VLCFA) as substrates, which prevents fatty acid efflux from cells and might drive more fatty acid uptake. May act directly as a bona fide transporter, or alternatively, in a cytoplasmic or membrane-associated multimeric protein complex to trap and draw fatty acids towards accumulation. Plays a pivotal role in regulating available LCFA substrates from exogenous sources in tissues undergoing high levels of beta-oxidation or triglyceride synthesis. May be involved in regulation of cholesterol metabolism. Probably involved in fatty acid transport across the blood barrier. The sequence is that of Long-chain fatty acid transport protein 1 from Mus musculus (Mouse).